The sequence spans 510 residues: ATP synthase subunit alpha 1 (510 aa).

167–174 (GDRATGKT) is a binding site for ATP.

This sequence belongs to the ATPase alpha/beta chains family. F-type ATPases have 2 components, CF(1) - the catalytic core - and CF(0) - the membrane proton channel. CF(1) has five subunits: alpha(3), beta(3), gamma(1), delta(1), epsilon(1). CF(0) has three main subunits: a(1), b(2) and c(9-12). The alpha and beta chains form an alternating ring which encloses part of the gamma chain. CF(1) is attached to CF(0) by a central stalk formed by the gamma and epsilon chains, while a peripheral stalk is formed by the delta and b chains.

It is found in the cell inner membrane. It catalyses the reaction ATP + H2O + 4 H(+)(in) = ADP + phosphate + 5 H(+)(out). Produces ATP from ADP in the presence of a proton gradient across the membrane. The alpha chain is a regulatory subunit. The sequence is that of ATP synthase subunit alpha 1 from Paraburkholderia xenovorans (strain LB400).